Reading from the N-terminus, the 406-residue chain is Bifunctional enzyme IspD/IspF (406 aa).

A 2-C-methyl-D-erythritol 4-phosphate cytidylyltransferase region spans residues 1–247 (MSLIRVNGEA…ALFFNPAKDT (247 aa)). The segment at 248-406 (FIGMGFDTHA…HVSMRYKQKL (159 aa)) is 2-C-methyl-D-erythritol 2,4-cyclodiphosphate synthase. Residues Asp254 and His256 each coordinate a divalent metal cation. 4-CDP-2-C-methyl-D-erythritol 2-phosphate is bound by residues 254-256 (DTH) and 280-281 (HS). His288 contributes to the a divalent metal cation binding site. 4-CDP-2-C-methyl-D-erythritol 2-phosphate is bound by residues 302–304 (DIG), 307–311 (FPDND), 378–381 (TTME), Phe385, and Lys388.

It in the N-terminal section; belongs to the IspD/TarI cytidylyltransferase family. IspD subfamily. The protein in the C-terminal section; belongs to the IspF family. It depends on a divalent metal cation as a cofactor.

The catalysed reaction is 2-C-methyl-D-erythritol 4-phosphate + CTP + H(+) = 4-CDP-2-C-methyl-D-erythritol + diphosphate. It catalyses the reaction 4-CDP-2-C-methyl-D-erythritol 2-phosphate = 2-C-methyl-D-erythritol 2,4-cyclic diphosphate + CMP. Its pathway is isoprenoid biosynthesis; isopentenyl diphosphate biosynthesis via DXP pathway; isopentenyl diphosphate from 1-deoxy-D-xylulose 5-phosphate: step 2/6. It functions in the pathway isoprenoid biosynthesis; isopentenyl diphosphate biosynthesis via DXP pathway; isopentenyl diphosphate from 1-deoxy-D-xylulose 5-phosphate: step 4/6. Its function is as follows. Bifunctional enzyme that catalyzes the formation of 4-diphosphocytidyl-2-C-methyl-D-erythritol from CTP and 2-C-methyl-D-erythritol 4-phosphate (MEP) (IspD), and catalyzes the conversion of 4-diphosphocytidyl-2-C-methyl-D-erythritol 2-phosphate (CDP-ME2P) to 2-C-methyl-D-erythritol 2,4-cyclodiphosphate (ME-CPP) with a corresponding release of cytidine 5-monophosphate (CMP) (IspF). The protein is Bifunctional enzyme IspD/IspF of Helicobacter pylori (strain P12).